Here is an 874-residue protein sequence, read N- to C-terminus: DNA mismatch repair protein MutS (874 aa).

630 to 637 contributes to the ATP binding site; the sequence is GPNMAGKS.

Belongs to the DNA mismatch repair MutS family.

This protein is involved in the repair of mismatches in DNA. It is possible that it carries out the mismatch recognition step. This protein has a weak ATPase activity. The protein is DNA mismatch repair protein MutS of Chlorobium phaeovibrioides (strain DSM 265 / 1930) (Prosthecochloris vibrioformis (strain DSM 265)).